Reading from the N-terminus, the 528-residue chain is GMP synthase [glutamine-hydrolyzing] (528 aa).

The region spanning 13 to 204 (SILILDFGSQ…VYKISCCTAD (192 aa)) is the Glutamine amidotransferase type-1 domain. Cysteine 90 functions as the Nucleophile in the catalytic mechanism. Catalysis depends on residues histidine 178 and glutamate 180. The region spanning 205–403 (WTTETYIEET…LGLPDEIIKR (199 aa)) is the GMPS ATP-PPase domain. 232-238 (SGGVDSS) lines the ATP pocket.

As to quaternary structure, homodimer.

It catalyses the reaction XMP + L-glutamine + ATP + H2O = GMP + L-glutamate + AMP + diphosphate + 2 H(+). The protein operates within purine metabolism; GMP biosynthesis; GMP from XMP (L-Gln route): step 1/1. Functionally, catalyzes the synthesis of GMP from XMP. This chain is GMP synthase [glutamine-hydrolyzing], found in Prochlorococcus marinus (strain AS9601).